A 217-amino-acid polypeptide reads, in one-letter code: Resolvase homolog YneB (217 aa).

In terms of domain architecture, Resolvase/invertase-type recombinase catalytic spans Lys2–Gly147. Catalysis depends on Ser10, which acts as the O-(5'-phospho-DNA)-serine intermediate.

Belongs to the site-specific recombinase resolvase family.

The polypeptide is Resolvase homolog YneB (yneB) (Bacillus subtilis (strain 168)).